We begin with the raw amino-acid sequence, 561 residues long: Carboxylesterase patB (561 aa).

The first 19 residues, 1-19 (MQIINWASLLLVTWETVVA), serve as a signal peptide directing secretion. 3 N-linked (GlcNAc...) asparagine glycosylation sites follow: Asn38, Asn69, and Asn109. Ser263 (acyl-ester intermediate) is an active-site residue. Ser263 lines the substrate pocket. Asn316 is a glycosylation site (N-linked (GlcNAc...) asparagine). Glu385 acts as the Charge relay system in catalysis. N-linked (GlcNAc...) asparagine glycans are attached at residues Asn393, Asn412, Asn429, and Asn496.

This sequence belongs to the type-B carboxylesterase/lipase family.

It is found in the cytoplasm. Its subcellular location is the cytosol. It catalyses the reaction a carboxylic ester + H2O = an alcohol + a carboxylate + H(+). It functions in the pathway mycotoxin biosynthesis; patulin biosynthesis. Carboxylesterase; part of the gene cluster that mediates the biosynthesis of patulin, an acetate-derived tetraketide mycotoxin produced by several fungal species that shows antimicrobial properties against several bacteria. The function of patB in patulin synthesis has still to be characterized. The pathway begins with the synthesis of 6-methylsalicylic acid by the polyketide synthase (PKS) patK via condensation of acetate and malonate units. The 6-methylsalicylic acid decarboxylase patG then catalyzes the decarboxylation of 6-methylsalicylic acid to yield m-cresol (also known as 3-methylphenol). These first reactions occur in the cytosol. The intermediate m-cresol is then transported into the endoplasmic reticulum where the cytochrome P450 monooxygenase patH converts it to m-hydroxybenzyl alcohol, which is further converted to gentisyl alcohol by the cytochrome P450 monooxygenase patI. The oxidoreductases patJ and patO further convert gentisyl alcohol to isoepoxydon in the vacuole. PatN catalyzes then the transformation of isoepoxydon into phyllostine. The cluster protein patF is responsible for the conversion from phyllostine to neopatulin whereas the alcohol dehydrogenase patD converts neopatulin to E-ascladiol. The steps between isoepoxydon and E-ascladiol occur in the cytosol, and E-ascladiol is probably secreted to the extracellular space by one of the cluster-specific transporters patC or patM. Finally, the secreted patulin synthase patE catalyzes the conversion of E-ascladiol to patulin. This chain is Carboxylesterase patB, found in Penicillium expansum (Blue mold rot fungus).